We begin with the raw amino-acid sequence, 310 residues long: Putative HTH-type transcriptional regulatory protein SSO0942 (310 aa).

In terms of domain architecture, HTH cro/C1-type spans Leu-125–Val-180. The H-T-H motif DNA-binding region spans Ile-136 to Lys-155.

This is Putative HTH-type transcriptional regulatory protein SSO0942 from Saccharolobus solfataricus (strain ATCC 35092 / DSM 1617 / JCM 11322 / P2) (Sulfolobus solfataricus).